The primary structure comprises 776 residues: V-set and immunoglobulin domain-containing protein 10-like 2 (776 aa).

The signal sequence occupies residues 1–28 (MVGLSAHHRPLGCRLLILFCLLHPGASG). Ig-like domains are found at residues 32-140 (PTSN…LYLM), 150-234 (PRVQ…AFLD), 242-324 (PVIT…TTVQ), 399-498 (PTLA…LRLE), and 500-592 (PQLT…VLLE). Disulfide bonds link cysteine 56–cysteine 122, cysteine 169–cysteine 217, cysteine 268–cysteine 308, cysteine 435–cysteine 480, and cysteine 521–cysteine 576. Residues 608–708 (TPPNVTISRL…EVKTPVDPAF (101 aa)) form the Fibronectin type-III domain. Residues asparagine 611 and asparagine 637 are each glycosylated (N-linked (GlcNAc...) asparagine). Residues 713–733 (AVLGAAGTGVVVALATSLLVF) form a helical membrane-spanning segment.

The protein resides in the membrane. This Mus musculus (Mouse) protein is V-set and immunoglobulin domain-containing protein 10-like 2.